We begin with the raw amino-acid sequence, 509 residues long: Tyrosine-protein kinase Lck (509 aa).

The N-myristoyl glycine moiety is linked to residue G2. The interactions with CD4 and CD8 stretch occupies residues 2–72; that stretch reads GCGCSSHPED…DNLVIALHSY (71 aa). 2 S-palmitoyl cysteine lipidation sites follow: C3 and C5. One can recognise an SH3 domain in the interval 61 to 121; the sequence is LQDNLVIALH…PFNFVAKANS (61 aa). Residue K99 forms a Glycyl lysine isopeptide (Lys-Gly) (interchain with G-Cter in ubiquitin) linkage. At S102 the chain carries Phosphoserine. In terms of domain architecture, SH2 spans 127 to 224; the sequence is WFFKNLSRKD…GLCTRLSRPC (98 aa). An interaction with PTPRH region spans residues 154–242; sequence RESESTAGSF…WWEDEWEVPR (89 aa). T159 bears the Phosphothreonine mark. S162 bears the Phosphoserine mark. Phosphotyrosine is present on Y192. Residue S194 is modified to Phosphoserine. The region spanning 245-498 is the Protein kinase domain; it reads LKLVERLGAG…YLRSVLEDFF (254 aa). Residues 251–259 and K273 contribute to the ATP site; that span reads LGAGQFGEV. A Glycyl lysine isopeptide (Lys-Gly) (interchain with G-Cter in ubiquitin) cross-link involves residue K276. The active-site Proton acceptor is the D364. Y394 bears the Phosphotyrosine; by autocatalysis mark. Position 505 is a phosphotyrosine; by CSK (Y505).

It belongs to the protein kinase superfamily. Tyr protein kinase family. SRC subfamily. Binds to the cytoplasmic domain of cell surface receptors, such as AXL, CD2, CD4, CD5, CD8, CD44, CD45 and CD122. Also binds to effector molecules, such as PI4K, VAV1, RASA1, FYB1 and to other protein kinases including CDK1, RAF1, ZAP70 and SYK. Binds to phosphatidylinositol 3'-kinase (PI3K) from T-lymphocytes through its SH3 domain and to the tyrosine phosphorylated form of KHDRBS1/p70 through its SH2 domain. This interaction inhibits its tyrosine-kinase activity. Interacts with SQSTM1. Interacts with phosphorylated LIME1. Interacts with CBLB and PTPRH. Interacts with RUNX3. Forms a signaling complex with EPHA1, PTK2B and PI3-KINASE; upon activation by EFNA1 which may regulate T-lymphocyte migration. Associates with ZAP70 and RHOH; these interactions allow LCK-mediated RHOH and CD3 subunit phosphorylation in the presence of functional ZAP70. Interacts with UNC119; this interaction plays a crucial role in activation of LCK. Interacts with CEACAM1 (via cytoplasmic domain); mediates CEACAM1 phosphorylation resulting in PTPN6 recruitment that dephosphorylates TCR stimulation-induced CD247 and ZAP70. Interacts with CD160. Interacts with CD48. In terms of assembly, (Microbial infection) Interacts with herpes simplex virus 1 UL46; this interaction activates LCK. As to quaternary structure, (Microbial infection) Interacts with HIV-1 Nef through its SH3 domain. Autophosphorylated on Tyr-394, increasing enzymatic activity, this site is dephosphorylated by PTN22. Phosphorylated on Tyr-505 by CSK, decreasing activity. Dephosphorylated by PTPRC/CD45. Dephosphorylation at Tyr-394 by PTPN2 negatively regulates T-cell receptor signaling. Dephosphorylation at Tyr-394 by DUSP22 negatively regulates T-cell receptor signaling. Post-translationally, myristoylation is required prior to palmitoylation. In terms of processing, palmitoylation regulates association with the plasma membrane and could be mediated by ZDHHC2. 'Lys-63'-linked ubiquitinated at Lys-99 and Lys-276 by UBR2; this modification is required for autophosphorylation at Tyr-394. As to expression, expressed specifically in lymphoid cells.

It is found in the cell membrane. The protein localises to the cytoplasm. The protein resides in the cytosol. It carries out the reaction L-tyrosyl-[protein] + ATP = O-phospho-L-tyrosyl-[protein] + ADP + H(+). With respect to regulation, the relative activities of the inhibitory tyrosine-protein kinase CSK and the activating tyrosine-protein phosphatase PTPRC/CD45 determine the level of LCK activity. These interactions allow rapid and efficient activation of LCK in response to TCR stimulation. Its function is as follows. Non-receptor tyrosine-protein kinase that plays an essential role in the selection and maturation of developing T-cells in the thymus and in the function of mature T-cells. Plays a key role in T-cell antigen receptor (TCR)-linked signal transduction pathways. Constitutively associated with the cytoplasmic portions of the CD4 and CD8 surface receptors. Association of the TCR with a peptide antigen-bound MHC complex facilitates the interaction of CD4 and CD8 with MHC class II and class I molecules, respectively, thereby recruiting the associated LCK protein to the vicinity of the TCR/CD3 complex. LCK then phosphorylates tyrosine residues within the immunoreceptor tyrosine-based activation motifs (ITAM) of the cytoplasmic tails of the TCR-gamma chains and CD3 subunits, initiating the TCR/CD3 signaling pathway. Once stimulated, the TCR recruits the tyrosine kinase ZAP70, that becomes phosphorylated and activated by LCK. Following this, a large number of signaling molecules are recruited, ultimately leading to lymphokine production. LCK also contributes to signaling by other receptor molecules. Associates directly with the cytoplasmic tail of CD2, which leads to hyperphosphorylation and activation of LCK. Also plays a role in the IL2 receptor-linked signaling pathway that controls the T-cell proliferative response. Binding of IL2 to its receptor results in increased activity of LCK. Is expressed at all stages of thymocyte development and is required for the regulation of maturation events that are governed by both pre-TCR and mature alpha beta TCR. Phosphorylates other substrates including RUNX3, PTK2B/PYK2, the microtubule-associated protein MAPT, RHOH or TYROBP. Interacts with FYB2. This chain is Tyrosine-protein kinase Lck (LCK), found in Homo sapiens (Human).